Here is a 1002-residue protein sequence, read N- to C-terminus: Leucine-rich repeat receptor-like serine/threonine-protein kinase BAM2 (1002 aa).

The N-terminal stretch at 1–22 (MKLLLLLLLLLLLHISHSFTVA) is a signal peptide. Over 23–636 (KPITELHALL…SHVKPLSATT (614 aa)) the chain is Extracellular. Residues N51, N80, N97, N123, N130, N153, and N164 are each glycosylated (N-linked (GlcNAc...) asparagine). LRR repeat units lie at residues 68–92 (LRHV…VAHL), 93–116 (PLLQ…ISNL), 118–140 (ELRH…LSSG), 141–165 (LVNL…LTNL), 167–188 (QLRH…TYGT), 189–213 (WPVL…IGNL), 215–238 (TLRE…IGNL), 239–262 (SELV…IGKL), 263–285 (QKLD…ELGL), 286–309 (ISSL…SFSQ), 311–334 (KNLT…IGEM), 335–358 (PELE…LGEN), 359–382 (GRLV…MCSG), 384–406 (RLMT…LGKC), 407–430 (ESLT…LFGL), 431–456 (PKLS…GVSG), 458–479 (LGQI…IGNL), 480–503 (SGVQ…IGRL), 505–527 (QLSK…ISRC), 528–551 (KLLT…LTGM), 552–575 (KILN…IASM), and 577–600 (SLTS…QFSY). N212 and N237 each carry an N-linked (GlcNAc...) asparagine glycan. N-linked (GlcNAc...) asparagine glycosylation is found at N312 and N346. N-linked (GlcNAc...) asparagine glycosylation is present at N420. N478 is a glycosylation site (N-linked (GlcNAc...) asparagine). N-linked (GlcNAc...) asparagine glycosylation is found at N558, N587, and N602. Residues 637 to 657 (KLLLVLGLLFCSMVFAIVAII) traverse the membrane as a helical segment. Topologically, residues 658–1002 (KARSLRNASE…SGSPPDLLSN (345 aa)) are cytoplasmic. T682 bears the Phosphothreonine mark. A Protein kinase domain is found at 690 to 967 (LKEDNIIGKG…VQILTEIPKI (278 aa)). ATP-binding positions include 696 to 704 (IGKGGAGIV) and K718. Phosphotyrosine is present on residues Y765 and Y803. D816 acts as the Proton acceptor in catalysis. S851 carries the post-translational modification Phosphoserine. Phosphotyrosine occurs at positions 859 and 866. Position 867 is a phosphothreonine (T867). The disordered stretch occupies residues 969 to 1002 (LSKQQAAESDVTEKAPAINESSPDSGSPPDLLSN). Positions 989 to 1002 (SSPDSGSPPDLLSN) are enriched in low complexity.

The protein belongs to the protein kinase superfamily. Ser/Thr protein kinase family. As to quaternary structure, interacts with BAM1 and CLV1. Binds to the CLV3, CLE11, CLE18, CLE19, CLE22, CLE25, CLE26, CLE40, CLE41 and CLE42 mature peptides, probably via its extracellular leucine-rich repeat region. In terms of tissue distribution, expressed in seedlings, roots, rosette leaves, stems, inflorescences, flowers and siliques.

It localises to the cell membrane. It catalyses the reaction L-seryl-[protein] + ATP = O-phospho-L-seryl-[protein] + ADP + H(+). It carries out the reaction L-threonyl-[protein] + ATP = O-phospho-L-threonyl-[protein] + ADP + H(+). Necessary for male gametophyte development, as well as ovule specification and function. Involved in cell-cell communication process required during early anther development, and regulating cell division and differentiation to organize cell layers. Required for the development of high-ordered vascular strands within the leaf and a correlated control of leaf shape, size and symmetry. May regulate the CLV1-dependent CLV3-mediated signaling in meristems maintenance. In Arabidopsis thaliana (Mouse-ear cress), this protein is Leucine-rich repeat receptor-like serine/threonine-protein kinase BAM2 (BAM2).